The chain runs to 149 residues: Pleckstrin homology domain-containing family J member 1 (149 aa).

Residues 15-108 (PAEMAAELGM…WMEALRRASY (94 aa)) enclose the PH domain.

In terms of tissue distribution, expressed in testis and liver.

The sequence is that of Pleckstrin homology domain-containing family J member 1 (PLEKHJ1) from Homo sapiens (Human).